The chain runs to 388 residues: DNA replication and repair protein RecF (388 aa).

30-37 contacts ATP; sequence GNNAQGKS.

This sequence belongs to the RecF family.

The protein localises to the cytoplasm. In terms of biological role, the RecF protein is involved in DNA metabolism; it is required for DNA replication and normal SOS inducibility. RecF binds preferentially to single-stranded, linear DNA. It also seems to bind ATP. This Picosynechococcus sp. (strain ATCC 27264 / PCC 7002 / PR-6) (Agmenellum quadruplicatum) protein is DNA replication and repair protein RecF.